The primary structure comprises 255 residues: 3-deoxy-manno-octulosonate cytidylyltransferase (255 aa).

It belongs to the KdsB family.

Its subcellular location is the cytoplasm. The enzyme catalyses 3-deoxy-alpha-D-manno-oct-2-ulosonate + CTP = CMP-3-deoxy-beta-D-manno-octulosonate + diphosphate. It participates in nucleotide-sugar biosynthesis; CMP-3-deoxy-D-manno-octulosonate biosynthesis; CMP-3-deoxy-D-manno-octulosonate from 3-deoxy-D-manno-octulosonate and CTP: step 1/1. The protein operates within bacterial outer membrane biogenesis; lipopolysaccharide biosynthesis. Its function is as follows. Activates KDO (a required 8-carbon sugar) for incorporation into bacterial lipopolysaccharide in Gram-negative bacteria. In Saccharophagus degradans (strain 2-40 / ATCC 43961 / DSM 17024), this protein is 3-deoxy-manno-octulosonate cytidylyltransferase.